The following is a 420-amino-acid chain: Gamma-glutamyl phosphate reductase (420 aa).

This sequence belongs to the gamma-glutamyl phosphate reductase family.

The protein resides in the cytoplasm. It carries out the reaction L-glutamate 5-semialdehyde + phosphate + NADP(+) = L-glutamyl 5-phosphate + NADPH + H(+). The protein operates within amino-acid biosynthesis; L-proline biosynthesis; L-glutamate 5-semialdehyde from L-glutamate: step 2/2. Catalyzes the NADPH-dependent reduction of L-glutamate 5-phosphate into L-glutamate 5-semialdehyde and phosphate. The product spontaneously undergoes cyclization to form 1-pyrroline-5-carboxylate. The polypeptide is Gamma-glutamyl phosphate reductase (Neisseria gonorrhoeae (strain ATCC 700825 / FA 1090)).